We begin with the raw amino-acid sequence, 392 residues long: Formate-dependent phosphoribosylglycinamide formyltransferase (392 aa).

N(1)-(5-phospho-beta-D-ribosyl)glycinamide is bound by residues 22–23 (EL) and Glu82. ATP contacts are provided by residues Arg114, Lys155, 160-165 (SSGKGQ), 195-198 (EGVV), and Glu203. Residues 119–308 (RLAAEELGLP…EFALHVRAFL (190 aa)) enclose the ATP-grasp domain. Residues Glu267 and Glu279 each coordinate Mg(2+). Residues Asp286, Lys355, and 362–363 (RR) each bind N(1)-(5-phospho-beta-D-ribosyl)glycinamide.

The protein belongs to the PurK/PurT family. Homodimer.

It catalyses the reaction N(1)-(5-phospho-beta-D-ribosyl)glycinamide + formate + ATP = N(2)-formyl-N(1)-(5-phospho-beta-D-ribosyl)glycinamide + ADP + phosphate + H(+). It functions in the pathway purine metabolism; IMP biosynthesis via de novo pathway; N(2)-formyl-N(1)-(5-phospho-D-ribosyl)glycinamide from N(1)-(5-phospho-D-ribosyl)glycinamide (formate route): step 1/1. In terms of biological role, involved in the de novo purine biosynthesis. Catalyzes the transfer of formate to 5-phospho-ribosyl-glycinamide (GAR), producing 5-phospho-ribosyl-N-formylglycinamide (FGAR). Formate is provided by PurU via hydrolysis of 10-formyl-tetrahydrofolate. The sequence is that of Formate-dependent phosphoribosylglycinamide formyltransferase from Salmonella arizonae (strain ATCC BAA-731 / CDC346-86 / RSK2980).